The sequence spans 130 residues: MSKPRIALIAHDAKKDDIVALTGQFRETLAQCRLVATGTTGGRIAAAHGLEVERKLSGPLGGDLQIGAELADGRVDIVVFLRDPMTAQPHDPDITALVRACDVHDVPVATNVATARMLLDDLARNMQDVC.

One can recognise an MGS-like domain in the interval 1–130 (MSKPRIALIA…DLARNMQDVC (130 aa)). Residues His11, Lys15, 37 to 40 (TGTT), and 57 to 58 (SG) contribute to the substrate site. Catalysis depends on Asp63, which acts as the Proton donor/acceptor. Residue His90 coordinates substrate.

This sequence belongs to the methylglyoxal synthase family.

It carries out the reaction dihydroxyacetone phosphate = methylglyoxal + phosphate. Catalyzes the formation of methylglyoxal from dihydroxyacetone phosphate. This chain is Methylglyoxal synthase, found in Burkholderia ambifaria (strain MC40-6).